A 398-amino-acid polypeptide reads, in one-letter code: Acetate kinase (398 aa).

Residue Asn9 participates in Mg(2+) binding. Lys16 is a binding site for ATP. Arg89 serves as a coordination point for substrate. The Proton donor/acceptor role is filled by Asp146. ATP is bound by residues 206 to 210, 281 to 283, and 329 to 333; these read HLGNG, DCR, and GIGEN. Glu384 contacts Mg(2+).

The protein belongs to the acetokinase family. As to quaternary structure, homodimer. The cofactor is Mg(2+). Mn(2+) serves as cofactor.

The protein resides in the cytoplasm. The catalysed reaction is acetate + ATP = acetyl phosphate + ADP. It participates in metabolic intermediate biosynthesis; acetyl-CoA biosynthesis; acetyl-CoA from acetate: step 1/2. In terms of biological role, catalyzes the formation of acetyl phosphate from acetate and ATP. Can also catalyze the reverse reaction. This chain is Acetate kinase, found in Vibrio campbellii (strain ATCC BAA-1116).